Here is a 207-residue protein sequence, read N- to C-terminus: uncharacterized protein (207 aa).

Residues 177–197 (LILAIGFIIGILLPTFFILLG) traverse the membrane as a helical segment.

The protein localises to the membrane. This is an uncharacterized protein from Haemophilus influenzae (strain ATCC 51907 / DSM 11121 / KW20 / Rd).